The sequence spans 338 residues: MELPILPTSVIGSYPKPRWLLRMYKLRELGKIPEEDFKEAVRDASISVLREHERAGIDIPWDGEMGRSEMTEYFTSKIKGFKFYGPVRVWGNAYFNKAAAVDKLEYEEPLVLDEFLWVKENTTREIVKIPITGPYTIAEWSFNEYYPDKESFVMDLAEIINKELKVLEKHGAKFVQLDEPAMLNHPSEVPLAVDAINRAVKGIKMKVGLHVCYSNYNLLADYFDEIKVTQFALEFANRNFRDMDFLKKLSNKELGFGVVDVHNPRVESVEEIRQAIKKVFTYLEPEWVYINPDCGLKLLDRKIAYQKLVNMVQAVRGVRKELEKEGKTTIEFRTLKDI.

Zn(2+) is bound by residues histidine 210, cysteine 212, glutamate 234, and cysteine 294.

This sequence belongs to the archaeal MetE family. The cofactor is Zn(2+).

It functions in the pathway amino-acid biosynthesis; L-methionine biosynthesis via de novo pathway. In terms of biological role, catalyzes the transfer of a methyl group to L-homocysteine resulting in methionine formation. The physiological methyl donor is unknown. This is Methionine synthase from Pyrococcus furiosus (strain ATCC 43587 / DSM 3638 / JCM 8422 / Vc1).